The primary structure comprises 90 residues: Putative membrane protein insertion efficiency factor (90 aa).

This sequence belongs to the UPF0161 family.

Its subcellular location is the cell membrane. Functionally, could be involved in insertion of integral membrane proteins into the membrane. This chain is Putative membrane protein insertion efficiency factor, found in Lactococcus lactis subsp. cremoris (strain SK11).